Here is a 355-residue protein sequence, read N- to C-terminus: MSGQPKRLMVMAGGTGGHVFPGLAVAHHLMAQGWQVRWLGTADRMEADLVPKHGIDIDFIRISGLRGKGVKALLAAPLRIFNAWRQARAIMKRFKPDVVLGMGGYVSGPGGLAAWSLGIPVVLHEQNGIAGLTNQWLARIATTVMQAFPGAFPNAEVVGNPVRTDVLALPLPQVRLAGRDGPIRVLVVGGSQGARVLNQTMPQVAARLGDTVTIWHQSGKGAQLTVEQAYAGTGQPQHKVTEFIDDMAAAYAWADVVVCRSGALTVSEIAAAGLPAIFVPFQHKDRQQYWNALPLENAGAAKIFEQPQFTVEAVADTLAGWSREALLTMAERARAVSIPDATERVASEVSRVART.

UDP-N-acetyl-alpha-D-glucosamine is bound by residues 15–17, N127, R163, S191, I244, 263–268, and Q288; these read TGG and ALTVSE.

The protein belongs to the glycosyltransferase 28 family. MurG subfamily.

Its subcellular location is the cell inner membrane. It carries out the reaction di-trans,octa-cis-undecaprenyl diphospho-N-acetyl-alpha-D-muramoyl-L-alanyl-D-glutamyl-meso-2,6-diaminopimeloyl-D-alanyl-D-alanine + UDP-N-acetyl-alpha-D-glucosamine = di-trans,octa-cis-undecaprenyl diphospho-[N-acetyl-alpha-D-glucosaminyl-(1-&gt;4)]-N-acetyl-alpha-D-muramoyl-L-alanyl-D-glutamyl-meso-2,6-diaminopimeloyl-D-alanyl-D-alanine + UDP + H(+). The protein operates within cell wall biogenesis; peptidoglycan biosynthesis. Cell wall formation. Catalyzes the transfer of a GlcNAc subunit on undecaprenyl-pyrophosphoryl-MurNAc-pentapeptide (lipid intermediate I) to form undecaprenyl-pyrophosphoryl-MurNAc-(pentapeptide)GlcNAc (lipid intermediate II). The chain is UDP-N-acetylglucosamine--N-acetylmuramyl-(pentapeptide) pyrophosphoryl-undecaprenol N-acetylglucosamine transferase from Salmonella paratyphi A (strain ATCC 9150 / SARB42).